A 257-amino-acid polypeptide reads, in one-letter code: DIYKFYKLVENESHPHDYIDSQPEINERMRAILVDWLIDVHTKFELSLETLYLTINIIDRFLAVKTVPRRELQLVGISAMLMASKYEEIWPPEVNDFVCLSDRAYTHEQILAMEKTILNKLEWTLTVPTPFVFLVRFIKAAVPDQELENMAHFMSELGMMNYATLMYCPSMVAASAVFAARCTLNKAPLWNETLKLHTGYSQEQLMDCARLLVGFHSTLGNGKLRVVYRKYSDPQKGAVAVLPPAKLLSEGSASQHS.

Belongs to the cyclin family. Cyclin AB subfamily. As to quaternary structure, interacts with the CDC2 protein kinase to form a serine/threonine kinase holoenzyme complex also known as maturation promoting factor (MPF). The cyclin subunit imparts substrate specificity to the complex.

Essential for the control of the cell cycle at the G2/M (mitosis) transition. This Glycine max (Soybean) protein is G2/mitotic-specific cyclin S13-7.